A 389-amino-acid chain; its full sequence is Lipid-A-disaccharide synthase (389 aa).

Belongs to the LpxB family.

The enzyme catalyses a lipid X + a UDP-2-N,3-O-bis[(3R)-3-hydroxyacyl]-alpha-D-glucosamine = a lipid A disaccharide + UDP + H(+). It participates in bacterial outer membrane biogenesis; LPS lipid A biosynthesis. Condensation of UDP-2,3-diacylglucosamine and 2,3-diacylglucosamine-1-phosphate to form lipid A disaccharide, a precursor of lipid A, a phosphorylated glycolipid that anchors the lipopolysaccharide to the outer membrane of the cell. The polypeptide is Lipid-A-disaccharide synthase (Burkholderia ambifaria (strain MC40-6)).